Here is a 171-residue protein sequence, read N- to C-terminus: Putative metal-dependent hydrolase BH0277 (171 aa).

Positions 64, 155, and 159 each coordinate Zn(2+).

Belongs to the metal hydrolase YfiT family. In terms of assembly, homodimer. Requires Zn(2+) as cofactor.

Its subcellular location is the cytoplasm. Possible metal-dependent hydrolase. This is Putative metal-dependent hydrolase BH0277 from Halalkalibacterium halodurans (strain ATCC BAA-125 / DSM 18197 / FERM 7344 / JCM 9153 / C-125) (Bacillus halodurans).